A 300-amino-acid chain; its full sequence is Ubiquinone biosynthesis protein COQ4, mitochondrial (300 aa).

Zn(2+) is bound by residues His173, Asp174, His177, and Glu189.

This sequence belongs to the COQ4 family. Component of a multi-subunit COQ enzyme complex, composed of at least COQ3, COQ4, COQ5, COQ6, COQ7 and COQ9. The cofactor is Zn(2+).

Its subcellular location is the mitochondrion inner membrane. It catalyses the reaction a 4-hydroxy-3-methoxy-5-(all-trans-polyprenyl)benzoate + H(+) = a 2-methoxy-6-(all-trans-polyprenyl)phenol + CO2. The protein operates within cofactor biosynthesis; ubiquinone biosynthesis. In terms of biological role, lyase that catalyzes the C1-decarboxylation of 4-hydroxy-3-methoxy-5-(all-trans-polyprenyl)benzoic acid into 2-methoxy-6-(all-trans-polyprenyl)phenol during ubiquinone biosynthesis. This Cryptococcus neoformans var. neoformans serotype D (strain JEC21 / ATCC MYA-565) (Filobasidiella neoformans) protein is Ubiquinone biosynthesis protein COQ4, mitochondrial.